A 143-amino-acid polypeptide reads, in one-letter code: Pre-mRNA-splicing factor U5-Cwc21 (143 aa).

In terms of domain architecture, CWF21 spans 27 to 70 (EHHRSLRAIKLKVLLYREEREAAGVPPDVISRECATLHGSLLRN).

Belongs to the CWC21 family. In terms of assembly, associates with the NTC complex (or PRP19-associated complex). The NTC complex associates with the spliceosome after the release of the U1 and U4 snRNAs and forms the CWC spliceosome subcomplex reminiscent of a late-stage spliceosome. Associates specifically with U5-containing snRNPs.

It is found in the cytoplasm. Its subcellular location is the nucleus. Its function is as follows. Essential protein involved in pre-mRNA cis- and trans-splicing. May function at or prior to the first catalytic step of splicing at the catalytic center of the spliceosome. May do so by stabilizing the catalytic center or the position of the RNA substrate. The protein is Pre-mRNA-splicing factor U5-Cwc21 of Trypanosoma brucei brucei (strain 927/4 GUTat10.1).